Consider the following 311-residue polypeptide: Glycine--tRNA ligase alpha subunit (311 aa).

Belongs to the class-II aminoacyl-tRNA synthetase family. As to quaternary structure, tetramer of two alpha and two beta subunits.

The protein localises to the cytoplasm. It catalyses the reaction tRNA(Gly) + glycine + ATP = glycyl-tRNA(Gly) + AMP + diphosphate. This chain is Glycine--tRNA ligase alpha subunit, found in Rhizobium meliloti (strain 1021) (Ensifer meliloti).